A 241-amino-acid polypeptide reads, in one-letter code: ATP synthase subunit a (241 aa).

The next 7 helical transmembrane spans lie at 27-47 (NCSL…CWAL), 52-72 (VVPG…ANTL), 87-107 (VMTT…PFGF), 112-132 (HLSV…VIGF), 142-162 (IFLP…IKLF), 175-195 (LAAN…FVLK), and 198-218 (LVLA…EIFV).

It belongs to the ATPase A chain family. As to quaternary structure, F-type ATPases have 2 components, CF(1) - the catalytic core - and CF(0) - the membrane proton channel. CF(1) has five subunits: alpha(3), beta(3), gamma(1), delta(1), epsilon(1). CF(0) has three main subunits: a(1), b(2) and c(9-12). The alpha and beta chains form an alternating ring which encloses part of the gamma chain. CF(1) is attached to CF(0) by a central stalk formed by the gamma and epsilon chains, while a peripheral stalk is formed by the delta and b chains.

The protein localises to the cell inner membrane. Functionally, key component of the proton channel; it plays a direct role in the translocation of protons across the membrane. The chain is ATP synthase subunit a from Anaplasma marginale (strain St. Maries).